Consider the following 140-residue polypeptide: Class I hydrophobin B (140 aa).

Positions 1–16 are cleaved as a signal peptide; it reads MKFLAVVSLLAATALA. 4 disulfide bridges follow: C42/C113, C50/C107, C51/C88, and C114/C133. Residue N117 is glycosylated (N-linked (GlcNAc...) asparagine).

The protein belongs to the fungal hydrophobin family. In terms of assembly, self-assembles to form functional amyloid fibrils called rodlets. Self-assembly into fibrillar rodlets occurs spontaneously at hydrophobic:hydrophilic interfaces and the rodlets further associate laterally to form amphipathic monolayers.

It is found in the secreted. Its subcellular location is the spore wall. Aerial growth, conidiation, and dispersal of filamentous fungi in the environment rely upon a capability of their secreting small amphipathic proteins called hydrophobins (HPBs) with low sequence identity. Class I can self-assemble into an outermost layer of rodlet bundles on aerial cell surfaces, conferring cellular hydrophobicity that supports fungal growth, development and dispersal; whereas Class II form highly ordered films at water-air interfaces through intermolecular interactions but contribute nothing to the rodlet structure. RodB is a class I hydrophobin that, unlike rodA, is not required for rodlet formation. This Aspergillus fumigatus (strain ATCC MYA-4609 / CBS 101355 / FGSC A1100 / Af293) (Neosartorya fumigata) protein is Class I hydrophobin B.